We begin with the raw amino-acid sequence, 428 residues long: Transcription factor bHLH91 (428 aa).

A bHLH domain is found at 210–259 (KRKNKPFTTERERRCHLNERYEALKLLIPSPSKGDRASILQDGIDYINEL). The tract at residues 278 to 320 (RHKNNEVDDNNNNKNLDDHGNEDDDDDDENMEKKPESDVIDQC) is disordered. The segment covering 297-307 (GNEDDDDDDEN) has biased composition (acidic residues).

As to quaternary structure, homodimer. In terms of tissue distribution, flowers.

It localises to the nucleus. The protein is Transcription factor bHLH91 (BHLH91) of Arabidopsis thaliana (Mouse-ear cress).